A 309-amino-acid chain; its full sequence is Methionyl-tRNA formyltransferase (309 aa).

107 to 110 contributes to the (6S)-5,6,7,8-tetrahydrofolate binding site; sequence SLLP.

Belongs to the Fmt family.

The enzyme catalyses L-methionyl-tRNA(fMet) + (6R)-10-formyltetrahydrofolate = N-formyl-L-methionyl-tRNA(fMet) + (6S)-5,6,7,8-tetrahydrofolate + H(+). Its function is as follows. Attaches a formyl group to the free amino group of methionyl-tRNA(fMet). The formyl group appears to play a dual role in the initiator identity of N-formylmethionyl-tRNA by promoting its recognition by IF2 and preventing the misappropriation of this tRNA by the elongation apparatus. This is Methionyl-tRNA formyltransferase from Borrelia duttonii (strain Ly).